The primary structure comprises 49 residues: Large ribosomal subunit protein bL33A (49 aa).

It belongs to the bacterial ribosomal protein bL33 family.

The polypeptide is Large ribosomal subunit protein bL33A (Lactobacillus delbrueckii subsp. bulgaricus (strain ATCC 11842 / DSM 20081 / BCRC 10696 / JCM 1002 / NBRC 13953 / NCIMB 11778 / NCTC 12712 / WDCM 00102 / Lb 14)).